The primary structure comprises 131 residues: uncharacterized protein (131 aa).

This is an uncharacterized protein from Archaeoglobus fulgidus (strain ATCC 49558 / DSM 4304 / JCM 9628 / NBRC 100126 / VC-16).